Reading from the N-terminus, the 977-residue chain is Disks large-associated protein 3 (977 aa).

Residues 1 to 10 show a composition bias toward basic and acidic residues; sequence MRGYHGDRGS. Disordered regions lie at residues 1 to 24, 52 to 96, 137 to 167, 181 to 289, 398 to 417, and 529 to 582; these read MRGYHGDRGSHPRPARFADQQHMD, AGLG…MYPG, FHTLPYQRGPAGPGPGPGSGAAPEARSESPS, AKSH…CLDA, AMGDEESGDSDGSPKTSPKA, and PGSS…SADG. Residues 53–73 are compositionally biased toward low complexity; it reads GLGHLSPEGPLSLSEGPSSVG. Residue Ser58 is modified to Phosphoserine. Positions 74-87 are enriched in gly residues; it reads PEGGPGGVGAGGGS. The segment covering 189-201 has biased composition (basic and acidic residues); sequence PGKRDYNGPKADG. Residues 221–245 show a composition bias toward basic residues; the sequence is SHHHHHHHHHHHHQSRHGKRSKSKD. The segment covering 258 to 271 has biased composition (low complexity); sequence GWWSSDDNLDSDSG. A phosphoserine mark is found at Ser404, Ser407, Ser410, and Ser414. A compositionally biased stretch (pro residues) spans 538-547; the sequence is APPPIPPGSQ. Residues Ser641 and Ser643 each carry the phosphoserine modification. Disordered regions lie at residues 739 to 788 and 906 to 939; these read EGYP…RTSP and EEKKVPPPIPKKPSRGRGVPVKERSLDSVDRQRQ. Composition is skewed to basic and acidic residues over residues 767–777 and 925–939; these read GRRDSWMERGS and PVKERSLDSVDRQRQ. Phosphoserine is present on residues Ser930, Ser933, and Ser965.

This sequence belongs to the SAPAP family. In terms of assembly, interacts with DLG4/PSD-95. As to expression, highly expressed in central and peripherical nervous system (at protein level).

The protein localises to the cell membrane. It localises to the postsynaptic density. The protein resides in the synapse. May play a role in the molecular organization of synapses and neuronal cell signaling. Could be an adapter protein linking ion channel to the subsynaptic cytoskeleton. May induce enrichment of PSD-95/SAP90 at the plasma membrane. This is Disks large-associated protein 3 (Dlgap3) from Mus musculus (Mouse).